The primary structure comprises 360 residues: Epoxyqueuosine reductase (360 aa).

The active-site Proton donor is Asp142. One can recognise a 4Fe-4S ferredoxin-type domain in the interval 187–216 (APTEPVTAHCGSCQACMDVCPTQAIVAPHR). [4Fe-4S] cluster is bound by residues Cys196, Cys199, Cys202, Cys206, Cys222, Cys249, Cys252, and Cys256.

It belongs to the QueG family. As to quaternary structure, monomer. Cob(II)alamin is required as a cofactor. Requires [4Fe-4S] cluster as cofactor.

It is found in the cytoplasm. It catalyses the reaction epoxyqueuosine(34) in tRNA + AH2 = queuosine(34) in tRNA + A + H2O. It participates in tRNA modification; tRNA-queuosine biosynthesis. Functionally, catalyzes the conversion of epoxyqueuosine (oQ) to queuosine (Q), which is a hypermodified base found in the wobble positions of tRNA(Asp), tRNA(Asn), tRNA(His) and tRNA(Tyr). This Alicycliphilus denitrificans (strain DSM 14773 / CIP 107495 / K601) protein is Epoxyqueuosine reductase.